We begin with the raw amino-acid sequence, 102 residues long: Small ribosomal subunit protein uS10 (102 aa).

Belongs to the universal ribosomal protein uS10 family. In terms of assembly, part of the 30S ribosomal subunit.

Its function is as follows. Involved in the binding of tRNA to the ribosomes. The chain is Small ribosomal subunit protein uS10 from Carboxydothermus hydrogenoformans (strain ATCC BAA-161 / DSM 6008 / Z-2901).